The primary structure comprises 504 residues: Maturase K (504 aa).

Belongs to the intron maturase 2 family. MatK subfamily.

It localises to the plastid. Its subcellular location is the chloroplast. Usually encoded in the trnK tRNA gene intron. Probably assists in splicing its own and other chloroplast group II introns. The sequence is that of Maturase K from Barbarea vulgaris (Yellow rocket).